The primary structure comprises 523 residues: 2-isopropylmalate synthase (523 aa).

Residues 5-267 (VIIFDTTLRD…HTNINHHEIW (263 aa)) enclose the Pyruvate carboxyltransferase domain. Mn(2+) is bound by residues Asp-14, His-202, His-204, and Asn-238. Positions 392–523 (RLDYFSVQSG…QNKENNKETV (132 aa)) are regulatory domain.

The protein belongs to the alpha-IPM synthase/homocitrate synthase family. LeuA type 1 subfamily. In terms of assembly, homodimer. Mn(2+) is required as a cofactor.

Its subcellular location is the cytoplasm. The enzyme catalyses 3-methyl-2-oxobutanoate + acetyl-CoA + H2O = (2S)-2-isopropylmalate + CoA + H(+). Its pathway is amino-acid biosynthesis; L-leucine biosynthesis; L-leucine from 3-methyl-2-oxobutanoate: step 1/4. Catalyzes the condensation of the acetyl group of acetyl-CoA with 3-methyl-2-oxobutanoate (2-ketoisovalerate) to form 3-carboxy-3-hydroxy-4-methylpentanoate (2-isopropylmalate). The protein is 2-isopropylmalate synthase of Klebsiella pneumoniae (strain 342).